A 509-amino-acid polypeptide reads, in one-letter code: ATP synthase subunit alpha (509 aa).

An ATP-binding site is contributed by glycine 169–threonine 176.

The protein belongs to the ATPase alpha/beta chains family. F-type ATPases have 2 components, CF(1) - the catalytic core - and CF(0) - the membrane proton channel. CF(1) has five subunits: alpha(3), beta(3), gamma(1), delta(1), epsilon(1). CF(0) has four main subunits: a(1), b(1), b'(1) and c(9-12).

The protein resides in the cellular chromatophore membrane. The enzyme catalyses ATP + H2O + 4 H(+)(in) = ADP + phosphate + 5 H(+)(out). Its function is as follows. Produces ATP from ADP in the presence of a proton gradient across the membrane. The alpha chain is a regulatory subunit. This chain is ATP synthase subunit alpha, found in Rhodobacter capsulatus (Rhodopseudomonas capsulata).